We begin with the raw amino-acid sequence, 424 residues long: Light-independent protochlorophyllide reductase subunit N (424 aa).

Positions 26, 51, and 112 each coordinate [4Fe-4S] cluster.

Belongs to the BchN/ChlN family. In terms of assembly, protochlorophyllide reductase is composed of three subunits; BchL, BchN and BchB. Forms a heterotetramer of two BchB and two BchN subunits. Requires [4Fe-4S] cluster as cofactor.

It carries out the reaction chlorophyllide a + oxidized 2[4Fe-4S]-[ferredoxin] + 2 ADP + 2 phosphate = protochlorophyllide a + reduced 2[4Fe-4S]-[ferredoxin] + 2 ATP + 2 H2O. Its pathway is porphyrin-containing compound metabolism; bacteriochlorophyll biosynthesis (light-independent). Component of the dark-operative protochlorophyllide reductase (DPOR) that uses Mg-ATP and reduced ferredoxin to reduce ring D of protochlorophyllide (Pchlide) to form chlorophyllide a (Chlide). This reaction is light-independent. The NB-protein (BchN-BchB) is the catalytic component of the complex. The protein is Light-independent protochlorophyllide reductase subunit N of Rhodobacter capsulatus (strain ATCC BAA-309 / NBRC 16581 / SB1003).